A 188-amino-acid polypeptide reads, in one-letter code: Peptidyl-tRNA hydrolase (188 aa).

Position 14 (F14) interacts with tRNA. The active-site Proton acceptor is the H19. Positions 64, 66, and 112 each coordinate tRNA.

This sequence belongs to the PTH family. As to quaternary structure, monomer.

Its subcellular location is the cytoplasm. It catalyses the reaction an N-acyl-L-alpha-aminoacyl-tRNA + H2O = an N-acyl-L-amino acid + a tRNA + H(+). Hydrolyzes ribosome-free peptidyl-tRNAs (with 1 or more amino acids incorporated), which drop off the ribosome during protein synthesis, or as a result of ribosome stalling. Functionally, catalyzes the release of premature peptidyl moieties from peptidyl-tRNA molecules trapped in stalled 50S ribosomal subunits, and thus maintains levels of free tRNAs and 50S ribosomes. This chain is Peptidyl-tRNA hydrolase, found in Onion yellows phytoplasma (strain OY-M).